A 215-amino-acid polypeptide reads, in one-letter code: MSKVYDWFEERLEIQAIADDITSKYVPPHVNIFYCLGGITLTCFLVQVATGFAMTFYYRPTVTDAFASVQYIMTEANFGWLIRSVHRWSASMMVLMMILHVFRVYLTGGFKKPRELTWVTGVVLAVLTASFGVTGYSLPWDQIGYWAVKIVTGVPDAIPVIGSPLVELLRGSASVGQSTLTRFYSLHTFVLPLLTAVFMLMHFPMIRKQGISGPL.

A helical membrane pass occupies residues 32-52 (IFYCLGGITLTCFLVQVATGF). Cysteine 35 provides a ligand contact to heme c. Histidine 86 and histidine 100 together coordinate heme b. Helical transmembrane passes span 90–110 (ASMMVLMMILHVFRVYLTGGF), 116–136 (LTWVTGVVLAVLTASFGVTGY), and 186–206 (LHTFVLPLLTAVFMLMHFPMI). 2 residues coordinate heme b: histidine 187 and histidine 202.

The protein belongs to the cytochrome b family. PetB subfamily. As to quaternary structure, the 4 large subunits of the cytochrome b6-f complex are cytochrome b6, subunit IV (17 kDa polypeptide, PetD), cytochrome f and the Rieske protein, while the 4 small subunits are PetG, PetL, PetM and PetN. The complex functions as a dimer. Heme b is required as a cofactor. It depends on heme c as a cofactor.

The protein localises to the plastid. It is found in the chloroplast thylakoid membrane. In terms of biological role, component of the cytochrome b6-f complex, which mediates electron transfer between photosystem II (PSII) and photosystem I (PSI), cyclic electron flow around PSI, and state transitions. The polypeptide is Cytochrome b6 (Helianthus annuus (Common sunflower)).